The sequence spans 320 residues: MATAQSPTQLVRTLIDVSRFDKYNCLFAIFPGVWSIFLAAASRHADGVHLPSDWVLGRAGLAFAYTYLLSGAGMVWNDWIDRDIDAQVARTKNRPLASGRLATRAAIIWMLVQYAASVWLMDRMLSGQNLWTFMLPLTTGIILYPFGKRPTTRKLGIYPQYILGASSALTILPAWASVYGDSVAPPDLLAKCLPLCVFLFLWTIYFNTAYSYQDVKDDCRLSVNSSYVLAGQYVHGLLLLQAVAVVMVIPWILHENGSAWLWFSWLGVWTAALAEQLYLFDTKDPSTGGRVHRRNFALGIWNVLACFVELLLVSGSLDMF.

Transmembrane regions (helical) follow at residues 22-42, 60-80, 101-121, 127-147, 155-175, and 186-206; these read KYNC…AAAS, GLAF…NDWI, LATR…VWLM, GQNL…YPFG, LGIY…LPAW, and PDLL…TIYF. N224 is a glycosylation site (N-linked (GlcNAc...) asparagine). A helical membrane pass occupies residues 233-253; it reads YVHGLLLLQAVAVVMVIPWIL. The N-linked (GlcNAc...) asparagine glycan is linked to N256. 2 consecutive transmembrane segments (helical) span residues 260–280 and 296–316; these read WLWF…LYLF and FALG…VSGS.

The protein belongs to the UbiA prenyltransferase family. The cofactor is Mg(2+).

The protein resides in the membrane. It carries out the reaction 4-hydroxy-6-(pyridin-3-yl)-2H-pyran-2-one + (2E,6E)-farnesyl diphosphate = 4-hydroxy-3-[(2E,6E)-farnesyl]-6-(pyridin-3-yl)-2H-pyran-2-one + diphosphate. Its pathway is secondary metabolite biosynthesis; terpenoid biosynthesis. Functionally, polyprenyl transferase; part of the gene cluster that mediates the biosynthesis of pyripyropene A, a specific human acyl-coenzyme A:cholesterol acyltransferase 2 inhibitor. The first step of the pathway is the synthesis of nicotinyl-CoA from nicotinic acid by the nicotinic acid-CoA ligase pyr1. Nicotinyl-CoA is then a substrate of polyketide synthase pyr2 to produce 4-hydroxy-6-(3-pyridinyl)-2H-pyran-2-one (HPPO) which is further prenylated by the polyprenyl transferase pyr6 to yield farnesyl-HPPO. The next steps consist of an epoxidation of farnesyl-HPPO to epoxyfarnesyl-HPPO by FAD-dependent monooxygenase pyr5 and a cyclization of the terpenoid portion by the terpene cyclase pyr4 to yield deacetyl-pyripyropene E. The 2 cytochrome P450 monooxygenases pyr3 and pyr9, and the 2 acetyltransferases pyr7 and pyr8 are involved in the conversion of deacetyl-pyripyropene E into pyripyropene A through several cycles of oxidation and acetylation steps. Pyr7 acetylates deacetyl-pyripyropene E to pyripyropene E which is oxidized to 11-deacetyl-pyripyropene O by pyr3, which is in turn acetylated into pyripyropene O by pyr8. Pyripyropene O is then oxidized to deacetyl-pyripyropene A by pyr9. Deacetyl-pyripyropene A is finally acetylated to pyripyropene A by pyr8. In Aspergillus fumigatus (strain ATCC MYA-4609 / CBS 101355 / FGSC A1100 / Af293) (Neosartorya fumigata), this protein is Polyprenyl transferase pyr6.